The chain runs to 467 residues: Protein PHOSPHATE STARVATION RESPONSE 3 (467 aa).

The interval 227–266 (MSLPVSSCSDQEDLQDARSPAKVQLSSSRSSSGTASCNKP) is disordered. Positions 262–322 (SCNKPRLRWT…HLQKYRLAKY (61 aa)) constitute an HTH myb-type domain. A DNA-binding region (H-T-H motif) is located at residues 293-318 (PKGVLKLMKVEGLTIYHIKSHLQKYR). Residues 327–337 (KEDKKQEEKKT) show a composition bias toward basic and acidic residues. Disordered stretches follow at residues 327-353 (KEDKKQEEKKTKSVANGNDHAKKKSAQ) and 400-467 (RESI…VHDE). A compositionally biased stretch (polar residues) spans 402–412 (SISSMTSTTEG). Basic and acidic residues-rich tracts occupy residues 419 to 428 (PMEKTEDKAE) and 438 to 467 (RITDTDAECHSKVDNKKTKPQADLEMVHDE).

Expressed in the root cap and in the exodermis of the root, in the root tip of lateral roots, in the mesophyll cells of the leaf, in pollen, vascular cylinder of the anther and the veins of the lemma, palea and pistils, and in the xylem and phloem regions of large vascular bundles, small vascular bundles and diffuse vascular bundles in node I.

The protein localises to the nucleus. Functionally, transcription factor involved in phosphate starvation signaling. Binds to P1BS, an imperfect palindromic sequence 5'-GNATATNC-3', to promote the expression of inorganic phosphate (Pi) starvation-responsive genes. Functionally redundant with PHR1 and PHR2 in regulating Pi starvation response and Pi homeostasis. This chain is Protein PHOSPHATE STARVATION RESPONSE 3, found in Oryza sativa subsp. japonica (Rice).